Here is a 209-residue protein sequence, read N- to C-terminus: MEAYDICKFWKLDMLEEFSQIVLKGKKKIILDIPSPSQQNKSDIVSLCPADSPETCNSSIPDWLVKVMRKENGYDPKLIIKRRVLCTTDLRKNQGCLSMHLSKLEKSDFLTEDETRFLDEDFLKAKRDGLKVFLVDPESDKHVVYLKKWNGNTVWKYVLSHGWNNVIDKKIFKVNDVIEIWSFRDGSGKLCFALSSPTRCGRSSSGHSS.

Residues 101–198 (LSKLEKSDFL…KLCFALSSPT (98 aa)) constitute a DNA-binding region (TF-B3).

It localises to the nucleus. The chain is B3 domain-containing protein At2g31420 from Arabidopsis thaliana (Mouse-ear cress).